Here is an 890-residue protein sequence, read N- to C-terminus: Chloroquine resistance transporter (890 aa).

Disordered stretches follow at residues 1–163 and 280–300; these read MPPA…EAPL and GMQRPCFGSPSTDTRMGAAEG. The Cytoplasmic segment spans residues 1 to 349; the sequence is MPPAHHGSGG…RATRWIDRNA (349 aa). The span at 8 to 19 shows a compositional bias: basic residues; the sequence is SGGRRRPGRGNK. Low complexity-rich tracts occupy residues 102-126 and 134-156; these read APSQSDLPPSLSPTTASRPATSSRS and SPVASSSAFSSPAPSASALTSAS. Residues 350–372 form a helical membrane-spanning segment; the sequence is ATVRVACYTFLLLVTSTGNTICF. The Vacuolar segment spans residues 373-391; sequence KKMIDKMPNYSPCLTQVTT. Residues 392–412 traverse the membrane as a helical segment; that stretch reads VVFVPVFFALSLYTDYAGGLP. Residues 413–422 are Cytoplasmic-facing; sequence QEMADFPKRN. Residues 423-443 traverse the membrane as a helical segment; it reads FAVMGFLDSFSGVMAIIGAVH. At 444–447 the chain is on the vacuolar side; the sequence is TTGT. A helical membrane pass occupies residues 448 to 468; the sequence is TQVVLQQSCIVFSLLASIVML. Residues 469 to 471 are Cytoplasmic-facing; that stretch reads RKR. Residues 472–492 traverse the membrane as a helical segment; that stretch reads FHAAHYLGALVIILGVLVVKL. Over 493 to 505 the chain is Vacuolar; it reads PDLLHPSSDGGGD. Residues 506-526 traverse the membrane as a helical segment; that stretch reads VFVFNLLYLLSNLPTAVSCVY. At 527-544 the chain is on the cytoplasmic side; sequence KEVAFRGVEMGTNYLQAW. The chain crosses the membrane as a helical span at residues 545 to 565; the sequence is VALFQFLIGFLVLPLNALPVL. Over 566-614 the chain is Vacuolar; sequence GPQRVPLAELPASLWNGTRCLFGFNTIVTNCGGAGNMESPCDNCEGAWK. Asn581 is a glycosylation site (N-linked (GlcNAc...) asparagine). Cystine bridges form between Cys585-Cys609 and Cys596-Cys606. The chain crosses the membrane as a helical span at residues 615 to 634; that stretch reads YVGMYLSFNLLYNMFIIFVV. Residues 635–640 are Cytoplasmic-facing; it reads KSGGAA. The helical transmembrane segment at 641–663 threads the bilayer; sequence LTFLVSTLRLPVTALAFCSRAIM. The Vacuolar segment spans residues 664–673; that stretch reads GDRAVPPKAT. Residues 674 to 694 traverse the membrane as a helical segment; that stretch reads DFYGLLVLILGLVIYRAGGIM. The Cytoplasmic portion of the chain corresponds to 695-890; sequence KRRAQRRAVA…GKSRANNGCI (196 aa). A disordered region spans residues 798–871; it reads AAFTPFTQRM…NRVGGYEPPS (74 aa).

It belongs to the CRT-like transporter family.

The protein resides in the vacuole membrane. Nutrient transporter. Involved in maintaining the osmotic homeostasis of the digestive vacuole. Required for the proper organization of the endolysosomal system and, in turn, indirectly for microneme secretion and parasite invasion. Required for bradyzoite viability and cyst development. The polypeptide is Chloroquine resistance transporter (Toxoplasma gondii).